Consider the following 152-residue polypeptide: Transcriptional repressor NrdR (152 aa).

A zinc finger spans residues 3–34 (CPYCSYNESKVVDSRSTEDSISIRRRRECLEC). The 91-residue stretch at 49 to 139 (ILVIKKNLNR…VYRQFKDINT (91 aa)) folds into the ATP-cone domain.

The protein belongs to the NrdR family. Zn(2+) serves as cofactor.

Its function is as follows. Negatively regulates transcription of bacterial ribonucleotide reductase nrd genes and operons by binding to NrdR-boxes. In Clostridium tetani (strain Massachusetts / E88), this protein is Transcriptional repressor NrdR.